We begin with the raw amino-acid sequence, 283 residues long: Spore coat polysaccharide biosynthesis protein SpsK (283 aa).

The protein belongs to the dTDP-4-dehydrorhamnose reductase family.

It participates in spore coat biogenesis; spore coat polysaccharide biosynthesis. The chain is Spore coat polysaccharide biosynthesis protein SpsK (spsK) from Bacillus subtilis (strain 168).